Reading from the N-terminus, the 275-residue chain is MNGEARSRVVDQEAGSTPSTLRDEDHPSRQRLFGCLPYDIDLNPLRIVMAELVGTFILMFSVCGVISSTQLSGGHVGLLEYAVTAGLSVVVVVYSIGHISGAHLNPSITIAFAVFGGFPWSQVPLYITAQTLGATAATLVGVSVYGVNADIMATKPALSCVSAFFVELIATSIVVFLASALHCGPHQNLGNLTGFVIGTVISLGVLITGPISGGSMNPARSLGPAVVAWDFEDLWIYMTAPVIGAIIGVLTYRSISLKTRPCPSPVSPSVSSLLR.

The segment covering 1 to 11 has biased composition (basic and acidic residues); it reads MNGEARSRVVD. Residues 1 to 26 are disordered; sequence MNGEARSRVVDQEAGSTPSTLRDEDH. The next 2 membrane-spanning stretches (helical) occupy residues 47-67 and 76-96; these read IVMA…GVIS and VGLL…VYSI. An NPA 1 motif is present at residues 105-107; the sequence is NPS. 3 helical membrane-spanning segments follow: residues 127 to 147, 161 to 181, and 192 to 212; these read ITAQ…VYGV, VSAF…ASAL, and LTGF…GPIS. The short motif at 217-219 is the NPA 2 element; the sequence is NPA. Residues 231–251 form a helical membrane-spanning segment; that stretch reads FEDLWIYMTAPVIGAIIGVLT. Ser272 is modified (phosphoserine).

Belongs to the MIP/aquaporin (TC 1.A.8) family. NIP (TC 1.A.8.12) subfamily. Expressed in floral buds.

The protein localises to the membrane. Its function is as follows. Aquaporins facilitate the transport of water and small neutral solutes across cell membranes. The polypeptide is Probable aquaporin NIP7-1 (NIP7-1) (Arabidopsis thaliana (Mouse-ear cress)).